The chain runs to 209 residues: COP9 signalosome complex subunit 8 (209 aa).

Residues 8-179 (DNAFSFRKLL…GALDVSLNRF (172 aa)) enclose the PCI domain. Residue serine 175 is modified to Phosphoserine.

Belongs to the CSN8 family. In terms of assembly, component of the CSN complex, composed of COPS1/GPS1, COPS2, COPS3, COPS4, COPS5, COPS6, COPS7 (COPS7A or COPS7B), COPS8 and COPS9. In the complex, it probably interacts directly with COPS3, COPS4 and COPS7 (COPS7A or COPS7B).

It localises to the cytoplasm. It is found in the nucleus. Its function is as follows. Component of the COP9 signalosome complex (CSN), a complex involved in various cellular and developmental processes. The CSN complex is an essential regulator of the ubiquitin (Ubl) conjugation pathway by mediating the deneddylation of the cullin subunits of SCF-type E3 ligase complexes, leading to decrease the Ubl ligase activity of SCF-type complexes such as SCF, CSA or DDB2. The complex is also involved in phosphorylation of p53/TP53, c-jun/JUN, IkappaBalpha/NFKBIA, ITPK1 and IRF8/ICSBP, possibly via its association with CK2 and PKD kinases. CSN-dependent phosphorylation of TP53 and JUN promotes and protects degradation by the Ubl system, respectively. The sequence is that of COP9 signalosome complex subunit 8 (Cops8) from Rattus norvegicus (Rat).